A 270-amino-acid chain; its full sequence is SAMP-activating enzyme E1 (270 aa).

ATP-binding positions include G42, D63, 70–74, and K87; that span reads SNLQR. K113 participates in a covalent cross-link: Glycyl lysine isopeptide (Lys-Gly) (interchain with G-Cter in SAMP2). Position 131–132 (131–132) interacts with ATP; the sequence is DN. Zn(2+) contacts are provided by C171 and C174. C188 functions as the Glycyl thioester intermediate in the catalytic mechanism. Positions 245 and 248 each coordinate Zn(2+).

The protein belongs to the HesA/MoeB/ThiF family. Interacts with NcsA. Requires Zn(2+) as cofactor. Sampylated at Lys-113 with the archaeal ubiquitin-like protein SAMP2. Also sampylated with SAMP1.

It carries out the reaction [small archaeal modifier protein]-C-terminal Gly-Gly + ATP + H(+) = [small archaeal modifier protein]-C-terminal Gly-Gly-AMP + diphosphate. In terms of biological role, likely activates multiple ubiquitin-like SAMPs for protein conjugation as well as for sulfur transfer, via ATP-dependent adenylation at their C-terminus. In fact, it is required for the formation of all three SAMP1-, SAMP2- and SAMP3-protein conjugates, and for molybdenum cofactor (MoCo) biosynthesis and thiolation of tRNAs. The polypeptide is SAMP-activating enzyme E1 (ubaA) (Haloferax volcanii (strain ATCC 29605 / DSM 3757 / JCM 8879 / NBRC 14742 / NCIMB 2012 / VKM B-1768 / DS2) (Halobacterium volcanii)).